The primary structure comprises 388 residues: Succinate--CoA ligase [ADP-forming] subunit beta (388 aa).

In terms of domain architecture, ATP-grasp spans 9 to 244; that stretch reads KEILRKFGVA…PDEEDPKETQ (236 aa). ATP contacts are provided by residues lysine 46, 53 to 55, glutamate 99, cysteine 102, and glutamate 107; that span reads GRG. Mg(2+)-binding residues include asparagine 199 and aspartate 213. Substrate contacts are provided by residues asparagine 264 and 321 to 323; that span reads GIM.

Belongs to the succinate/malate CoA ligase beta subunit family. As to quaternary structure, heterotetramer of two alpha and two beta subunits. Requires Mg(2+) as cofactor.

It catalyses the reaction succinate + ATP + CoA = succinyl-CoA + ADP + phosphate. The enzyme catalyses GTP + succinate + CoA = succinyl-CoA + GDP + phosphate. The protein operates within carbohydrate metabolism; tricarboxylic acid cycle; succinate from succinyl-CoA (ligase route): step 1/1. Its function is as follows. Succinyl-CoA synthetase functions in the citric acid cycle (TCA), coupling the hydrolysis of succinyl-CoA to the synthesis of either ATP or GTP and thus represents the only step of substrate-level phosphorylation in the TCA. The beta subunit provides nucleotide specificity of the enzyme and binds the substrate succinate, while the binding sites for coenzyme A and phosphate are found in the alpha subunit. The polypeptide is Succinate--CoA ligase [ADP-forming] subunit beta (Anaeromyxobacter dehalogenans (strain 2CP-1 / ATCC BAA-258)).